The following is a 433-amino-acid chain: Xylose isomerase (433 aa).

Residues Asp305 and Asp307 each contribute to the Mg(2+) site.

This sequence belongs to the xylose isomerase family. Homotetramer. It depends on Mg(2+) as a cofactor.

It localises to the cytoplasm. It catalyses the reaction alpha-D-xylose = alpha-D-xylulofuranose. In Cereibacter sphaeroides (strain KD131 / KCTC 12085) (Rhodobacter sphaeroides), this protein is Xylose isomerase.